The sequence spans 1194 residues: ATP-dependent RNA helicase DHX30 (1194 aa).

Residues Met1 to Asp10 show a composition bias toward basic and acidic residues. Positions Met1 to Pro27 are disordered. Phosphoserine is present on residues Ser6 and Arg15. Positions Pro53 to Phe121 constitute a DRBM domain. The segment at Ala150–Glu199 is disordered. Acidic residues predominate over residues Glu188–Glu199. Residues Ser226 and Ser380 each carry the phosphoserine modification. The region spanning Leu444–Pro612 is the Helicase ATP-binding domain. Position 457–464 (Gly457–Thr464) interacts with ATP. Residues Asp559 to His562 carry the DEAH box motif. The region spanning Leu654–Met827 is the Helicase C-terminal domain.

It belongs to the DEAD box helicase family. DEAH subfamily. Identified in a complex with TFAM and SSBP1. Interacts with AGO1 and AGO2. Interacts (via N-terminus) with ZC3HAV1 (via N-terminal domain) in an RNA-independent manner. Found in a complex with GRSF1, DDX28, FASTKD2 and FASTKD5. Phosphorylated on Ser-15.

Its subcellular location is the cytoplasm. The protein localises to the mitochondrion. It is found in the mitochondrion matrix. It localises to the mitochondrion nucleoid. The catalysed reaction is ATP + H2O = ADP + phosphate + H(+). In terms of biological role, RNA-dependent helicase. Plays an important role in the assembly of the mitochondrial large ribosomal subunit. Required for optimal function of the zinc-finger antiviral protein ZC3HAV1. Associates with mitochondrial DNA. Involved in nervous system development and differentiation through its involvement in the up-regulation of a number of genes which are required for neurogenesis, including GSC, NCAM1, neurogenin, and NEUROD. This Homo sapiens (Human) protein is ATP-dependent RNA helicase DHX30 (DHX30).